Consider the following 1235-residue polypeptide: High-affinity potassium transport protein (1235 aa).

At serine 15 the chain carries Phosphoserine. The next 2 membrane-spanning stretches (helical) occupy residues 49–70 (SFIAVHYFYTISLTLITSILLY) and 78–98 (IDTLFLAAGAVTQGGLNTVDI). An N-linked (GlcNAc...) asparagine glycan is attached at asparagine 100. Residues 107-127 (IVLYIVCCISTPIAVHSCLAF) form a helical membrane-spanning segment. Disordered stretches follow at residues 161-310 (LTAR…SPAD), 323-344 (EATAEDEGPPLVIGSPADGTRY), 361-441 (KIKI…TKPP), and 488-565 (RLST…HQLQ). The segment covering 164 to 179 (RTMTKNRTGTQRTSYP) has biased composition (polar residues). N-linked (GlcNAc...) asparagine glycosylation is present at asparagine 169. A compositionally biased stretch (basic and acidic residues) spans 198 to 217 (VNRDEQDSVHSDQNSHDISR). Low complexity predominate over residues 219-232 (SSNNNTNHNGSSGS). N-linked (GlcNAc...) asparagine glycosylation is found at asparagine 222 and asparagine 227. Positions 237 to 247 (VKEDETDDNGE) are enriched in acidic residues. Residues 248-274 (YQENNSYSTVGSSSNTVADESLNQKPK) are compositionally biased toward polar residues. Asparagine 251 is a glycosylation site (N-linked (GlcNAc...) asparagine). Asparagine 369 and asparagine 383 each carry an N-linked (GlcNAc...) asparagine glycan. 2 stretches are compositionally biased toward polar residues: residues 370-415 (ESNT…SNSG) and 490-502 (STGSIEKNSSNNV). Serine 414 carries the post-translational modification Phosphoserine. N-linked (GlcNAc...) asparagine glycans are attached at residues asparagine 497, asparagine 501, and asparagine 532. The segment covering 510-539 (DMDDDDDDDDNDGDNNEEYFADNESGDEDE) has biased composition (acidic residues). Serine 534 is modified (phosphoserine). A compositionally biased stretch (basic and acidic residues) spans 540–563 (RVQQSEPHSDSELKSHQQQQEKHQ). Residues asparagine 580 and asparagine 677 are each glycosylated (N-linked (GlcNAc...) asparagine). The tract at residues 671–706 (HDGSHKNGSEEASSDSNENIYSTNGGSDHNGLNNYP) is disordered. Residues 680–706 (EEASSDSNENIYSTNGGSDHNGLNNYP) show a composition bias toward polar residues. A run of 5 helical transmembrane segments spans residues 778 to 800 (ILVVYYVGWHIVAFVMLVPWIIL), 813 to 834 (VSPTWWGFWTAMSAFNDLGLTL), 838 to 858 (SMMSFNKAVYPLIVMIWFIII), 862 to 882 (GFPILLRCIIWIMFKISPDLS), and 898 to 918 (CFTLLFPKAATWWLLLTLAGL). A glycan (N-linked (GlcNAc...) asparagine) is linked at asparagine 919. The next 2 helical transmembrane spans lie at 923-943 (WILFIILDFGSTVVKSLSKGY) and 971-991 (SIQVSYMLMMYVSVLPLAISI). The segment at 1003–1063 (GLYGDMGGEP…KKKKKTENPN (61 aa)) is disordered. The span at 1010 to 1031 (GEPEDTDTEDDGNDEDDDEENE) shows a compositional bias: acidic residues. Residue asparagine 1030 is glycosylated (N-linked (GlcNAc...) asparagine). A compositionally biased stretch (low complexity) spans 1036 to 1049 (QSSQRSSSNNNNNN). Helical transmembrane passes span 1078–1098 (QLSFDLWFLFLGLFIICICEG) and 1111–1131 (IFAILFEIVSAYGTVGLSLGY). Asparagine 1135 carries an N-linked (GlcNAc...) asparagine glycan.

This sequence belongs to the TrkH potassium transport family.

The protein localises to the membrane. In terms of biological role, this protein is required for high-affinity potassium transport. The protein is High-affinity potassium transport protein (TRK1) of Saccharomyces cerevisiae (strain ATCC 204508 / S288c) (Baker's yeast).